The sequence spans 176 residues: MAIIGIFFGSDTGNTENIAKMIQKQLGKDVADVHDIAKSSKEDLEAHDILLLGIPTWYYGEAQCDWDDFFPTLEEIDFNGKLVALFGCGDQEDYAEYFCDALGTIRDIIEPRGATIVGHWPTAGYHFEASKGLADDDHFVGLAIDEDRQPELTNERVEKWVKQVAEELHLEEIKNA.

Residues 4–165 form the Flavodoxin-like domain; sequence IGIFFGSDTG…RVEKWVKQVA (162 aa).

Belongs to the flavodoxin family. FMN is required as a cofactor.

Functionally, low-potential electron donor to a number of redox enzymes. The sequence is that of Flavodoxin (fldA) from Klebsiella pneumoniae.